The sequence spans 397 residues: ATP-dependent RNA helicase eIF4A (397 aa).

The Q motif signature appears at 24–52; sequence DSFDEMNLKPELLRGIYAYGFERPSAIQQ. A Helicase ATP-binding domain is found at 55 to 225; it reads IMPVIKGHDV…TKFMREPVRI (171 aa). 68-75 is an ATP binding site; it reads AQSGTGKT. Residues 173 to 176 carry the DEAD box motif; sequence DEAD. The region spanning 236–397 is the Helicase C-terminal domain; the sequence is GIKQFYIAVE…EMPMNVADLI (162 aa).

Belongs to the DEAD box helicase family. eIF4A subfamily. Component of the eIF4F complex, which composition varies with external and internal environmental conditions. It is composed of at least eIF4A, eIF4E and eIF4G.

The protein localises to the cytoplasm. It catalyses the reaction ATP + H2O = ADP + phosphate + H(+). ATP-dependent RNA helicase which is a subunit of the eIF4F complex involved in cap recognition and is required for mRNA binding to ribosome. In the current model of translation initiation, eIF4A unwinds RNA secondary structures in the 5'-UTR of mRNAs which is necessary to allow efficient binding of the small ribosomal subunit, and subsequent scanning for the initiator codon. This is ATP-dependent RNA helicase eIF4A (tif-1) from Neurospora crassa (strain ATCC 24698 / 74-OR23-1A / CBS 708.71 / DSM 1257 / FGSC 987).